The following is a 256-amino-acid chain: MLLVIDVGNSNIVLGIYDNERLVRDWRVSTDKSKTPDEYGILVHDLFRLAGIGFSDIKDIIISSVVPTLTGALEKLSRQYFGFKPYVVGPGIKTGMPIQYDNPKEVGADRIVNAVAGFEKHHCALIIVDFGTATTFDYVNKRGEYCGGAIAPGLMISMEALFQKASKLPRVEIAKPPAIIAKNTVNSMQAGIYYGYVGLVDGIVTRMKGEGKDNPRVIATGGLAGLIAPESATIEEVDEYLTLEGLRILYQRNRET.

Position 6–13 (6–13) interacts with ATP; sequence DVGNSNIV. Substrate is bound by residues Tyr-100 and 107–110; that span reads GADR. The active-site Proton acceptor is Asp-109. Asp-129 lines the K(+) pocket. Residue Thr-132 participates in ATP binding. A substrate-binding site is contributed by Thr-184.

Belongs to the type III pantothenate kinase family. Homodimer. It depends on NH4(+) as a cofactor. The cofactor is K(+).

The protein localises to the cytoplasm. It carries out the reaction (R)-pantothenate + ATP = (R)-4'-phosphopantothenate + ADP + H(+). It functions in the pathway cofactor biosynthesis; coenzyme A biosynthesis; CoA from (R)-pantothenate: step 1/5. Functionally, catalyzes the phosphorylation of pantothenate (Pan), the first step in CoA biosynthesis. The chain is Type III pantothenate kinase from Geotalea uraniireducens (strain Rf4) (Geobacter uraniireducens).